Consider the following 125-residue polypeptide: Histone H1-like protein Hc1 (125 aa).

Residues 98-125 (TKAKVKPTKKAAPKTKVKTAKKTRSTKK) form a disordered region. Residues 100-125 (AKVKPTKKAAPKTKVKTAKKTRSTKK) are compositionally biased toward basic residues.

Belongs to the histone H1/H5 family. HCT subfamily.

In terms of biological role, might have a role analogous to that of eukaryotic histone proteins. In Chlamydia trachomatis serovar D (strain ATCC VR-885 / DSM 19411 / UW-3/Cx), this protein is Histone H1-like protein Hc1 (hctA).